Reading from the N-terminus, the 638-residue chain is 1-deoxy-D-xylulose-5-phosphate synthase (638 aa).

Thiamine diphosphate contacts are provided by residues histidine 81 and 122–124; that span reads GHS. Aspartate 153 lines the Mg(2+) pocket. Thiamine diphosphate-binding positions include 154–155, asparagine 182, tyrosine 293, and glutamate 377; that span reads GS. Asparagine 182 is a binding site for Mg(2+).

This sequence belongs to the transketolase family. DXPS subfamily. As to quaternary structure, homodimer. Mg(2+) serves as cofactor. Thiamine diphosphate is required as a cofactor.

It catalyses the reaction D-glyceraldehyde 3-phosphate + pyruvate + H(+) = 1-deoxy-D-xylulose 5-phosphate + CO2. Its pathway is metabolic intermediate biosynthesis; 1-deoxy-D-xylulose 5-phosphate biosynthesis; 1-deoxy-D-xylulose 5-phosphate from D-glyceraldehyde 3-phosphate and pyruvate: step 1/1. Catalyzes the acyloin condensation reaction between C atoms 2 and 3 of pyruvate and glyceraldehyde 3-phosphate to yield 1-deoxy-D-xylulose-5-phosphate (DXP). The protein is 1-deoxy-D-xylulose-5-phosphate synthase of Oleidesulfovibrio alaskensis (strain ATCC BAA-1058 / DSM 17464 / G20) (Desulfovibrio alaskensis).